The primary structure comprises 541 residues: Zinc finger protein 503 (541 aa).

The span at 1–18 (MSNSPLGSGSRISHFTTE) shows a compositional bias: polar residues. Disordered stretches follow at residues 1 to 49 (MSNS…QAGR) and 97 to 255 (TCSQ…SSSV). Residues 137 to 157 (AEDKSSFKPYSKHPDKKDQSA) are compositionally biased toward basic and acidic residues. The segment covering 236–255 (SLSAAPSPTPASSSSSSSSV) has biased composition (low complexity). The C2H2-type zinc-finger motif lies at 411-439 (HVCNWVSATGPCDKRFSSSEELLGHLRTH). The tract at residues 474–511 (GASPGPLTLRSPHHHPLGLSSSRYHPYSKSPLPSGGAP) is disordered.

Belongs to the Elbow/Noc family.

Its subcellular location is the nucleus. Its function is as follows. May function as a transcriptional repressor. This Xenopus tropicalis (Western clawed frog) protein is Zinc finger protein 503 (znf503).